Consider the following 545-residue polypeptide: CTP synthase (545 aa).

Positions Met-1–Leu-266 are amidoligase domain. Residue Ser-14 coordinates CTP. Ser-14 contributes to the UTP binding site. ATP-binding positions include Ser-15–Ile-20 and Asp-72. Asp-72 and Glu-140 together coordinate Mg(2+). Residues Asp-147–Glu-149, Lys-187–Gln-192, and Lys-223 contribute to the CTP site. UTP contacts are provided by residues Lys-187 to Gln-192 and Lys-223. An ATP-binding site is contributed by Lys-239–Val-241. Residues Val-291 to Arg-542 form the Glutamine amidotransferase type-1 domain. Gly-352 lines the L-glutamine pocket. The active-site Nucleophile; for glutamine hydrolysis is the Cys-379. L-glutamine contacts are provided by residues Leu-380–Gln-383, Glu-403, and Arg-470. Residues His-515 and Glu-517 contribute to the active site.

It belongs to the CTP synthase family. In terms of assembly, homotetramer.

The enzyme catalyses UTP + L-glutamine + ATP + H2O = CTP + L-glutamate + ADP + phosphate + 2 H(+). The catalysed reaction is L-glutamine + H2O = L-glutamate + NH4(+). It catalyses the reaction UTP + NH4(+) + ATP = CTP + ADP + phosphate + 2 H(+). It participates in pyrimidine metabolism; CTP biosynthesis via de novo pathway; CTP from UDP: step 2/2. Allosterically activated by GTP, when glutamine is the substrate; GTP has no effect on the reaction when ammonia is the substrate. The allosteric effector GTP functions by stabilizing the protein conformation that binds the tetrahedral intermediate(s) formed during glutamine hydrolysis. Inhibited by the product CTP, via allosteric rather than competitive inhibition. Functionally, catalyzes the ATP-dependent amination of UTP to CTP with either L-glutamine or ammonia as the source of nitrogen. Regulates intracellular CTP levels through interactions with the four ribonucleotide triphosphates. The polypeptide is CTP synthase (Shewanella putrefaciens (strain CN-32 / ATCC BAA-453)).